The following is a 793-amino-acid chain: Potassium transporter 18 (793 aa).

Topologically, residues 1–53 are cytoplasmic; that stretch reads METRTNEYSRKGAMWELERNLDQPMDAEAGRLRNMYREKTYPTILLLRLAFQS. A helical membrane pass occupies residues 54–74; it reads LGVVFGDLGTSPLYVFYNIFP. Topologically, residues 75–86 are extracellular; sequence HGIEDTEQVIGA. The chain crosses the membrane as a helical span at residues 87–107; the sequence is LSLIIYSLTLIPLVKYVFIVL. Residues 108 to 172 lie on the Cytoplasmic side of the membrane; sequence RANDNGQGGT…WLEGHQFRKN (65 aa). A helical transmembrane segment spans residues 173-193; the sequence is LILILVLFGTCMAVGDGILTP. Residues 194–214 lie on the Extracellular side of the membrane; sequence AISVLSATGGIQVEEGRMRND. Residues 215–235 form a helical membrane-spanning segment; the sequence is VVVIISVLILIGLFSMQHYGT. The Cytoplasmic portion of the chain corresponds to 236–237; sequence DK. Residues 238 to 258 form a helical membrane-spanning segment; the sequence is VSWLFAPIVFVWFILIGILGA. Over 259-287 the chain is Extracellular; that stretch reads VNICKYDHSVLKAFNPVYVYRYFKRGKTS. Residues 288-308 form a helical membrane-spanning segment; the sequence is WTSLGGIMLSITGTEALFADL. A topological domain (cytoplasmic) is located at residue Ser-309. Residues 310–330 form a helical membrane-spanning segment; that stretch reads YFPVQAIQIAFTVVVFPCLLL. The Extracellular segment spans residues 331 to 351; it reads QYTGQAAFIAANTNQVSHAFY. Residues 352–372 traverse the membrane as a helical segment; sequence ISLPAPILWPAFAVATAAAIV. At 373–409 the chain is on the cytoplasmic side; sequence ASQATISATYSIIKQALALGCFPRVKIIHTSKKYLGQ. A helical membrane pass occupies residues 410-430; it reads IYSPDINWILMVFCIAVTAGF. Residues 431–442 lie on the Extracellular side of the membrane; the sequence is KNQSQIANAYGT. An N-linked (GlcNAc...) asparagine glycan is attached at Asn-432. Residues 443-463 form a helical membrane-spanning segment; the sequence is AVIMVMLVTTFLMIPIMLLVW. At 464-468 the chain is on the cytoplasmic side; that stretch reads RSHWT. Residues 469-489 form a helical membrane-spanning segment; sequence LVVAFTVLSLLVEIPYFSAVV. Topologically, residues 490 to 494 are extracellular; that stretch reads RKIDQ. A helical transmembrane segment spans residues 495–515; the sequence is GGWVPLVFAAGFMIIMYVWHY. The Cytoplasmic portion of the chain corresponds to 516 to 793; the sequence is GTLKRYEFEM…MLNVGQVFYV (278 aa).

It belongs to the HAK/KUP transporter (TC 2.A.72.3) family.

It localises to the membrane. Functionally, high-affinity potassium transporter. This is Potassium transporter 18 (HAK18) from Oryza sativa subsp. japonica (Rice).